Consider the following 360-residue polypeptide: DNA replication and repair protein RecF (360 aa).

30-37 serves as a coordination point for ATP; the sequence is GQNGSGKT.

Belongs to the RecF family.

It is found in the cytoplasm. Its function is as follows. The RecF protein is involved in DNA metabolism; it is required for DNA replication and normal SOS inducibility. RecF binds preferentially to single-stranded, linear DNA. It also seems to bind ATP. This is DNA replication and repair protein RecF from Shewanella baltica (strain OS155 / ATCC BAA-1091).